The following is a 2073-amino-acid chain: Non-reducing polyketide synthase cla3 (2073 aa).

The tract at residues 9–242 (LLFGDYTEPW…EKLNIHALQH (234 aa)) is N-terminal acylcarrier protein transacylase domain (SAT). The 431-residue stretch at 363–793 (SGRIAIVGMS…GGNGCLLLEE (431 aa)) folds into the Ketosynthase family 3 (KS3) domain. Catalysis depends on for beta-ketoacyl synthase activity residues Cys-538, His-673, and His-712. Residues 898–1198 (TFTGQGSQYA…KIMSTLDATG (301 aa)) are malonyl-CoA:ACP transacylase (MAT) domain. The For acyl/malonyl transferase activity role is filled by Ser-987. Residues 1276–1590 (STCAQYVITE…QNVILERLLG (315 aa)) form a product template (PT) domain region. Residues 1279-1420 (AQYVITETKT…AGLESQWEKS (142 aa)) form an N-terminal hotdog fold region. The PKS/mFAS DH domain occupies 1279–1586 (AQYVITETKT…FHRVQNVILE (308 aa)). His-1311 acts as the Proton acceptor; for dehydratase activity in catalysis. Positions 1439-1586 (QGHRIQRDIY…FHRVQNVILE (148 aa)) are C-terminal hotdog fold. Asp-1500 (proton donor; for dehydratase activity) is an active-site residue. Residues 1594–1637 (SSSVPAQASDPLRSKRSPQEARSLPGEAKTEKPGSTIATTSPVL) form a disordered region. The region spanning 1641-1718 (KSEQGMFQAL…NLRCAFDEDV (78 aa)) is the Carrier domain. Residue Ser-1678 is modified to O-(pantetheine 4'-phosphoryl)serine. Over residues 1721 to 1738 (EFTDSEVTSGTPNSSESV) the composition is skewed to polar residues. Residues 1721 to 1786 (EFTDSEVTSG…GVLDDGSPQP (66 aa)) are disordered. The segment covering 1747–1774 (PEEHAFKEPKDDSPLARRDMDNSNDRSL) has biased composition (basic and acidic residues). Positions 1805-1950 (FLIADGSGSI…MQQHLRAIFK (146 aa)) are thioesterase (TE) domain. His-2058 (for thioesterase activity) is an active-site residue.

The protein operates within secondary metabolite biosynthesis. In terms of biological role, highly reducing polyketide synthase; part of the gene cluster that mediates the biosynthesis of cladosporin, a tricyclic octaketide that acts as an antimalarial agent though inhibition of the Plasmodium falciparum lysyl-tRNA synthetase. The highly reducing polyketide synthase cla2 is responsible for biosynthesis up to the pentaketide stage, including of the tetrahydropyran (THP) ring, whereas the three subsequent ketide extensions with no reduction are catalyzed by the non-reducing polyketide synthase cla3. The chain is Non-reducing polyketide synthase cla3 from Cladosporium cladosporioides.